A 466-amino-acid polypeptide reads, in one-letter code: SVGFKAGVKEYKLTYYTPEYEVKDTDILAAFRVTPQPGVPPEEAGAAVAAESSTGTWTTVWTDGLTSLDRYKGRCYHIEPVLGEEDQYICYVAYPLDLFEEGSVTNMFTSIVGNVFGFKALRALRLEDLRIPIAYVKTFEGPPHGIQVERDKLNKYGRPLLGCTIKPKLGLSAKNYGRAVYECLRGGLDFTKDDENVNSQPFMRWRDRFLFCAEAIYKAQAETGEIKGHYLNATAGTCEEMMKRAVCARELGVPIVMHDYLTGGFTANTSLAHYCRDNGLLLHIHRAMHAVIDRQKNHGMHFRVLAKALRMSGGDHIHAGTVVGKLEGERDITLGFVDLLRDDFIEKDRSRGIYFTQDWVSMPGVLPVASGGIHVWHMPALTEIFGDDSVLQFGGGTLGHPWGNAPGAVANRVALEACVQARNEGRDLAREGNEIIREASKWSPELAAACEVWKAIKFEFDAVDNL.

Lys5 bears the N6,N6,N6-trimethyllysine mark. Residues Asn114 and Thr164 each coordinate substrate. The Proton acceptor role is filled by Lys166. Lys168 provides a ligand contact to substrate. 3 residues coordinate Mg(2+): Lys192, Asp194, and Glu195. The residue at position 192 (Lys192) is an N6-carboxylysine. His285 functions as the Proton acceptor in the catalytic mechanism. Substrate is bound by residues Arg286, His318, and Ser370.

The protein belongs to the RuBisCO large chain family. Type I subfamily. Heterohexadecamer of 8 large chains and 8 small chains; disulfide-linked. The disulfide link is formed within the large subunit homodimers. Requires Mg(2+) as cofactor. The disulfide bond which can form in the large chain dimeric partners within the hexadecamer appears to be associated with oxidative stress and protein turnover.

Its subcellular location is the plastid. The protein localises to the chloroplast. The catalysed reaction is 2 (2R)-3-phosphoglycerate + 2 H(+) = D-ribulose 1,5-bisphosphate + CO2 + H2O. The enzyme catalyses D-ribulose 1,5-bisphosphate + O2 = 2-phosphoglycolate + (2R)-3-phosphoglycerate + 2 H(+). In terms of biological role, ruBisCO catalyzes two reactions: the carboxylation of D-ribulose 1,5-bisphosphate, the primary event in carbon dioxide fixation, as well as the oxidative fragmentation of the pentose substrate in the photorespiration process. Both reactions occur simultaneously and in competition at the same active site. In Thespesia populnea (Portia tree), this protein is Ribulose bisphosphate carboxylase large chain.